The chain runs to 205 residues: GTP cyclohydrolase 1 (205 aa).

Zn(2+)-binding residues include Cys-93, His-96, and Cys-166.

The protein belongs to the GTP cyclohydrolase I family. Homomer.

It carries out the reaction GTP + H2O = 7,8-dihydroneopterin 3'-triphosphate + formate + H(+). The protein operates within cofactor biosynthesis; 7,8-dihydroneopterin triphosphate biosynthesis; 7,8-dihydroneopterin triphosphate from GTP: step 1/1. This Mycobacterium leprae (strain Br4923) protein is GTP cyclohydrolase 1.